We begin with the raw amino-acid sequence, 202 residues long: Adenylyl-sulfate kinase (202 aa).

35–42 (GLSGSGKS) provides a ligand contact to ATP. The active-site Phosphoserine intermediate is S109.

Belongs to the APS kinase family.

The catalysed reaction is adenosine 5'-phosphosulfate + ATP = 3'-phosphoadenylyl sulfate + ADP + H(+). The protein operates within sulfur metabolism; hydrogen sulfide biosynthesis; sulfite from sulfate: step 2/3. In terms of biological role, catalyzes the synthesis of activated sulfate. This Bacteroides fragilis (strain YCH46) protein is Adenylyl-sulfate kinase.